A 513-amino-acid chain; its full sequence is Xylose import ATP-binding protein XylG (513 aa).

2 consecutive ABC transporter domains span residues 5–242 (LEMK…VGRE) and 259–505 (LRIE…LRSE). 37–44 (GENGSGKS) serves as a coordination point for ATP.

Belongs to the ABC transporter superfamily. Xylose importer (TC 3.A.1.2.4) family. In terms of assembly, the complex is composed of two ATP-binding proteins (XylG), two transmembrane proteins (XylH) and a solute-binding protein (XylF).

The protein localises to the cell inner membrane. The catalysed reaction is D-xylose(out) + ATP + H2O = D-xylose(in) + ADP + phosphate + H(+). In terms of biological role, part of the ABC transporter complex XylFGH involved in xylose import. Responsible for energy coupling to the transport system. The polypeptide is Xylose import ATP-binding protein XylG (Shigella flexneri serotype 5b (strain 8401)).